The following is a 714-amino-acid chain: Elongation factor G-like protein (714 aa).

Residues 21-289 (GGVRNVVLVG…VATRGFPSPM (269 aa)) form the tr-type G domain. Positions 30–37 (GPSGGGKT) are G1. Residue 30-37 (GPSGGGKT) coordinates GTP. Residues 73–77 (QRSVG) form a G2 region. The tract at residues 94-97 (DTPG) is G3. GTP is bound by residues 94–98 (DTPGY) and 148–151 (TKLD). Positions 148–151 (TKLD) are G4. Residues 267–269 (CSS) are G5.

Belongs to the TRAFAC class translation factor GTPase superfamily. Classic translation factor GTPase family. EF-G/EF-2 subfamily.

This is Elongation factor G-like protein from Mycobacterium tuberculosis (strain CDC 1551 / Oshkosh).